Consider the following 575-residue polypeptide: Beta-amylase (575 aa).

The N-terminal stretch at 1–36 (MLHSQKRIWKKIGLCLLSFILGITVFTGSFGSKAEA) is a signal peptide. D77 serves as a coordination point for substrate. Ca(2+)-binding residues include E84 and D88. Residues H117 and D125 each contribute to the substrate site. C119 and C127 form a disulfide bridge. E171 is a binding site for Ca(2+). The active-site Proton donor is the E199. Positions 315, 320, and 358 each coordinate substrate. The active-site Proton acceptor is E395. Substrate is bound by residues 396-397 (NA) and R424.

It belongs to the glycosyl hydrolase 14 family. As to quaternary structure, monomer. Requires Ca(2+) as cofactor.

It catalyses the reaction Hydrolysis of (1-&gt;4)-alpha-D-glucosidic linkages in polysaccharides so as to remove successive maltose units from the non-reducing ends of the chains.. This Niallia circulans (Bacillus circulans) protein is Beta-amylase.